Here is a 99-residue protein sequence, read N- to C-terminus: uncharacterized protein (99 aa).

This is an uncharacterized protein from Haemophilus influenzae (strain ATCC 51907 / DSM 11121 / KW20 / Rd).